A 274-amino-acid polypeptide reads, in one-letter code: Shikimate dehydrogenase (NADP(+)) (274 aa).

Shikimate is bound by residues 14 to 16 (SKS) and Thr-60. The active-site Proton acceptor is Lys-64. Glu-76 serves as a coordination point for NADP(+). Shikimate contacts are provided by Asn-85 and Asp-101. Residues 126–130 (GAGGA), 150–155 (NRTARK), and Met-214 contribute to the NADP(+) site. Tyr-216 provides a ligand contact to shikimate. Gly-238 is an NADP(+) binding site.

The protein belongs to the shikimate dehydrogenase family. As to quaternary structure, homodimer.

It catalyses the reaction shikimate + NADP(+) = 3-dehydroshikimate + NADPH + H(+). The protein operates within metabolic intermediate biosynthesis; chorismate biosynthesis; chorismate from D-erythrose 4-phosphate and phosphoenolpyruvate: step 4/7. Involved in the biosynthesis of the chorismate, which leads to the biosynthesis of aromatic amino acids. Catalyzes the reversible NADPH linked reduction of 3-dehydroshikimate (DHSA) to yield shikimate (SA). The protein is Shikimate dehydrogenase (NADP(+)) of Pseudomonas aeruginosa (strain ATCC 15692 / DSM 22644 / CIP 104116 / JCM 14847 / LMG 12228 / 1C / PRS 101 / PAO1).